Here is a 490-residue protein sequence, read N- to C-terminus: MARFELQKLYIDGGYVDASNPETFDAINPANGEVLAQIQRAGKDDVERAVVAAEKGQKIWAAMTAVERSRILRRAVDILRERNDELAALETLDTGKAISETRYVDIVTGADVLEYYAGLVPAIEGEQIPLRDSSFVYTRREPLGVVAGIGAWNYPIQIALWKSAPALAAGNAMIFKPSEVTSLTTLKLAEIYTEAGVPNGVFNVLTGSGREVGTWITEHPRIEKVSFTGGTDTGKKVMASASSSSLKEVTMELGGKSPLIVFDDADLDRAADIAMMANFYSSGQVCTNGTRVFVPNALKAEFEAKILERVKRIRAGNPEDENINFGPLVSFEHMESVLGYIAKGKEQGARLLCGGDRLTGGVFDKGAFVAPTVFTDCTDEMTIVREEIFGPVMSILGYDTEDEVVRRANDTDFGLAAGIVTRDLNRAHRVIHLLEAGICWINAWGESAAQMPVGGYKQSGVGRENGISSLAQYTRIKSVQIELGDYASVF.

2 residues coordinate K(+): Ile27 and Asp93. 150 to 152 (GAW) lines the NAD(+) pocket. Lys162 acts as the Charge relay system in catalysis. 176–179 (KPSE) lines the NAD(+) pocket. K(+) is bound at residue Val180. 230–233 (GTDT) lines the NAD(+) pocket. K(+) is bound at residue Leu246. Glu252 serves as the catalytic Proton acceptor. NAD(+) is bound by residues Gly254, Cys286, and Glu387. Catalysis depends on Cys286, which acts as the Nucleophile. Residue Cys286 is modified to Cysteine sulfenic acid (-SOH). Lys457 and Gly460 together coordinate K(+). The active-site Charge relay system is Glu464.

This sequence belongs to the aldehyde dehydrogenase family. As to quaternary structure, dimer of dimers. K(+) serves as cofactor.

The enzyme catalyses betaine aldehyde + NAD(+) + H2O = glycine betaine + NADH + 2 H(+). It participates in amine and polyamine biosynthesis; betaine biosynthesis via choline pathway; betaine from betaine aldehyde: step 1/1. In terms of biological role, involved in the biosynthesis of the osmoprotectant glycine betaine. Catalyzes the irreversible oxidation of betaine aldehyde to the corresponding acid. The sequence is that of Betaine aldehyde dehydrogenase from Pseudomonas syringae pv. syringae (strain B728a).